The following is a 521-amino-acid chain: Acetyl-CoA hydrolase (521 aa).

Residue 276–280 (GIGNI) participates in CoA binding. The active-site 5-glutamyl coenzyme A thioester intermediate is the Glu-301. Residues Asn-391 and Gly-395 each coordinate CoA.

The protein belongs to the acetyl-CoA hydrolase/transferase family.

The protein localises to the cytoplasm. The enzyme catalyses acetyl-CoA + H2O = acetate + CoA + H(+). Functionally, presumably involved in regulating the intracellular acetyl-CoA pool for fatty acid and cholesterol synthesis and fatty acid oxidation. The chain is Acetyl-CoA hydrolase (ach1) from Schizosaccharomyces pombe (strain 972 / ATCC 24843) (Fission yeast).